A 101-amino-acid chain; its full sequence is Large ribosomal subunit protein uL24 (101 aa).

Belongs to the universal ribosomal protein uL24 family. Part of the 50S ribosomal subunit.

One of two assembly initiator proteins, it binds directly to the 5'-end of the 23S rRNA, where it nucleates assembly of the 50S subunit. Functionally, one of the proteins that surrounds the polypeptide exit tunnel on the outside of the subunit. In Streptococcus equi subsp. zooepidemicus (strain H70), this protein is Large ribosomal subunit protein uL24.